The sequence spans 79 residues: Small ribosomal subunit protein uS17 (79 aa).

The protein belongs to the universal ribosomal protein uS17 family. In terms of assembly, part of the 30S ribosomal subunit.

One of the primary rRNA binding proteins, it binds specifically to the 5'-end of 16S ribosomal RNA. In Rhizobium leguminosarum bv. trifolii (strain WSM2304), this protein is Small ribosomal subunit protein uS17.